The primary structure comprises 316 residues: DNA-directed RNA polymerase subunit alpha (316 aa).

An alpha N-terminal domain (alpha-NTD) region spans residues 1–230 (MIEFEKPNIH…EHLAMFVDLT (230 aa)). The alpha C-terminal domain (alpha-CTD) stretch occupies residues 247-316 (KEKMLEMTIE…DLGLSLRKED (70 aa)).

It belongs to the RNA polymerase alpha chain family. As to quaternary structure, homodimer. The RNAP catalytic core consists of 2 alpha, 1 beta, 1 beta' and 1 omega subunit. When a sigma factor is associated with the core the holoenzyme is formed, which can initiate transcription.

It carries out the reaction RNA(n) + a ribonucleoside 5'-triphosphate = RNA(n+1) + diphosphate. Functionally, DNA-dependent RNA polymerase catalyzes the transcription of DNA into RNA using the four ribonucleoside triphosphates as substrates. This chain is DNA-directed RNA polymerase subunit alpha, found in Levilactobacillus brevis (strain ATCC 367 / BCRC 12310 / CIP 105137 / JCM 1170 / LMG 11437 / NCIMB 947 / NCTC 947) (Lactobacillus brevis).